Reading from the N-terminus, the 232-residue chain is Protein DOG1-like 4 (232 aa).

The region spanning 9 to 229 (EEKFLEFYES…RRWGNRRHYV (221 aa)) is the DOG1 domain.

The chain is Protein DOG1-like 4 from Arabidopsis thaliana (Mouse-ear cress).